The sequence spans 520 residues: MFAQQYDHSFNDLFNQYVNMETSAADGKDSALSEFDQLFPLDSLSNDCGDLAPTVSTPKCHQSPQPWSNEWSLQYDGPAADHFAFHDTVHPSAISDVNLNHFEVPSRPTATHALSISPSTPPATPRRKPTQSALITPKTIRHRSPNERRSHLRKQSFSPSLMRSSNLSKSRMAYPEAWAQRLQNFSLHNSEDRLPLSPPPSDALIQHENMPTEQIMNQSRDSAEMPPQYDARLYHQSPSVPMQSPSIAMSARQQQHYIAHPSSSALTNSSPSSADDIFSLSHSSDLHSLSSWQSDSLHASSLPFTPDLQGQESQWWSPMPSRVAQQQAAYLASPTPVRHMQNVGSQNDIMQGGLMIQFNPSYDMSADHSFSSNMLPTSSQKFDTSYTSSQVHDISRSSSSLSPKTGTSPRDTHHGSISKPTHRRTHSRKLSSQSMNTPKPAKAPSSSSRGSNKSVSVSFVNFTADDSKKILTGVAPSGSSKTKARREQEARDRRRKLSEAALRAVRSAGGDVEALEAVLC.

Polar residues-rich tracts occupy residues 109-118 (TATHALSISP), 155-165 (QSFSPSLMRSS), and 378-392 (SSQK…SQVH). Disordered regions lie at residues 109 to 165 (TATH…MRSS), 378 to 454 (SSQK…SNKS), and 468 to 496 (KKIL…RRRK). A compositionally biased stretch (basic residues) spans 420–429 (PTHRRTHSRK). Residues 445–454 (SSSSRGSNKS) show a composition bias toward low complexity.

It belongs to the wetA family.

Functionally, brlA, abaA and wetA are pivotal regulators of conidiophore development and conidium maturation. They act individually and together to regulate their own expression and that of numerous other sporulation-specific genes. The chain is Developmental regulatory protein wetA from Penicillium roqueforti (strain FM164).